Reading from the N-terminus, the 101-residue chain is Urease subunit beta (101 aa).

This sequence belongs to the urease beta subunit family. As to quaternary structure, heterotrimer of UreA (gamma), UreB (beta) and UreC (alpha) subunits. Three heterotrimers associate to form the active enzyme.

It is found in the cytoplasm. It catalyses the reaction urea + 2 H2O + H(+) = hydrogencarbonate + 2 NH4(+). The protein operates within nitrogen metabolism; urea degradation; CO(2) and NH(3) from urea (urease route): step 1/1. The sequence is that of Urease subunit beta from Pseudomonas paraeruginosa (strain DSM 24068 / PA7) (Pseudomonas aeruginosa (strain PA7)).